Reading from the N-terminus, the 295-residue chain is Glycine--tRNA ligase alpha subunit (295 aa).

It belongs to the class-II aminoacyl-tRNA synthetase family. Tetramer of two alpha and two beta subunits.

The protein localises to the cytoplasm. The catalysed reaction is tRNA(Gly) + glycine + ATP = glycyl-tRNA(Gly) + AMP + diphosphate. This chain is Glycine--tRNA ligase alpha subunit, found in Desulforamulus reducens (strain ATCC BAA-1160 / DSM 100696 / MI-1) (Desulfotomaculum reducens).